A 132-amino-acid polypeptide reads, in one-letter code: Small ribosomal subunit protein uS8 (132 aa).

The protein belongs to the universal ribosomal protein uS8 family. In terms of assembly, part of the 30S ribosomal subunit. Contacts proteins S5 and S12.

In terms of biological role, one of the primary rRNA binding proteins, it binds directly to 16S rRNA central domain where it helps coordinate assembly of the platform of the 30S subunit. This is Small ribosomal subunit protein uS8 from Beijerinckia indica subsp. indica (strain ATCC 9039 / DSM 1715 / NCIMB 8712).